A 218-amino-acid chain; its full sequence is N-(5'-phosphoribosyl)anthranilate isomerase (218 aa).

This sequence belongs to the TrpF family.

The enzyme catalyses N-(5-phospho-beta-D-ribosyl)anthranilate = 1-(2-carboxyphenylamino)-1-deoxy-D-ribulose 5-phosphate. Its pathway is amino-acid biosynthesis; L-tryptophan biosynthesis; L-tryptophan from chorismate: step 3/5. This is N-(5'-phosphoribosyl)anthranilate isomerase from Rhodopseudomonas palustris (strain BisB18).